The sequence spans 311 residues: tRNA(Ile)-lysidine synthase (311 aa).

31–36 (SGGKDS) lines the ATP pocket.

This sequence belongs to the tRNA(Ile)-lysidine synthase family.

Its subcellular location is the cytoplasm. It catalyses the reaction cytidine(34) in tRNA(Ile2) + L-lysine + ATP = lysidine(34) in tRNA(Ile2) + AMP + diphosphate + H(+). Functionally, ligates lysine onto the cytidine present at position 34 of the AUA codon-specific tRNA(Ile) that contains the anticodon CAU, in an ATP-dependent manner. Cytidine is converted to lysidine, thus changing the amino acid specificity of the tRNA from methionine to isoleucine. The sequence is that of tRNA(Ile)-lysidine synthase from Petrotoga mobilis (strain DSM 10674 / SJ95).